We begin with the raw amino-acid sequence, 354 residues long: Fructose-bisphosphate aldolase (354 aa).

Serine 50 contacts D-glyceraldehyde 3-phosphate. The Proton donor role is filled by aspartate 83. Residues histidine 84, aspartate 105, glutamate 142, and histidine 198 each coordinate Zn(2+). A dihydroxyacetone phosphate-binding site is contributed by glycine 199. Histidine 232 serves as a coordination point for Zn(2+). Residues 233–235 and 275–278 each bind dihydroxyacetone phosphate; these read GSS and NIDT.

This sequence belongs to the class II fructose-bisphosphate aldolase family. Zn(2+) serves as cofactor.

It carries out the reaction beta-D-fructose 1,6-bisphosphate = D-glyceraldehyde 3-phosphate + dihydroxyacetone phosphate. The protein operates within carbohydrate degradation; glycolysis; D-glyceraldehyde 3-phosphate and glycerone phosphate from D-glucose: step 4/4. In terms of biological role, catalyzes the aldol condensation of dihydroxyacetone phosphate (DHAP or glycerone-phosphate) with glyceraldehyde 3-phosphate (G3P) to form fructose 1,6-bisphosphate (FBP) in gluconeogenesis and the reverse reaction in glycolysis. The protein is Fructose-bisphosphate aldolase (fba) of Pseudomonas aeruginosa (strain ATCC 15692 / DSM 22644 / CIP 104116 / JCM 14847 / LMG 12228 / 1C / PRS 101 / PAO1).